The primary structure comprises 367 residues: Phospho-N-acetylmuramoyl-pentapeptide-transferase (367 aa).

The next 10 membrane-spanning stretches (helical) occupy residues 16 to 36 (LLLA…WVRF), 62 to 82 (TMGG…FNLV), 87 to 107 (MLLP…DDWL), 125 to 145 (FWIM…PQPY), 158 to 178 (VGEV…IVFI), 190 to 210 (SLAG…TFLA), 214 to 234 (LTNL…FLWY), 240 to 260 (QVFM…VVAL), 264 to 284 (QWLL…STMI), and 326 to 346 (FVLI…IFGP).

It belongs to the glycosyltransferase 4 family. MraY subfamily. Mg(2+) serves as cofactor.

The protein resides in the cell membrane. It catalyses the reaction UDP-N-acetyl-alpha-D-muramoyl-L-alanyl-gamma-D-glutamyl-meso-2,6-diaminopimeloyl-D-alanyl-D-alanine + di-trans,octa-cis-undecaprenyl phosphate = di-trans,octa-cis-undecaprenyl diphospho-N-acetyl-alpha-D-muramoyl-L-alanyl-D-glutamyl-meso-2,6-diaminopimeloyl-D-alanyl-D-alanine + UMP. It participates in cell wall biogenesis; peptidoglycan biosynthesis. Its function is as follows. Catalyzes the initial step of the lipid cycle reactions in the biosynthesis of the cell wall peptidoglycan: transfers peptidoglycan precursor phospho-MurNAc-pentapeptide from UDP-MurNAc-pentapeptide onto the lipid carrier undecaprenyl phosphate, yielding undecaprenyl-pyrophosphoryl-MurNAc-pentapeptide, known as lipid I. The polypeptide is Phospho-N-acetylmuramoyl-pentapeptide-transferase (Chloroflexus aurantiacus (strain ATCC 29366 / DSM 635 / J-10-fl)).